The following is a 501-amino-acid chain: Histidine--tRNA ligase (501 aa).

The protein belongs to the class-II aminoacyl-tRNA synthetase family. As to quaternary structure, homodimer.

It is found in the cytoplasm. It catalyses the reaction tRNA(His) + L-histidine + ATP = L-histidyl-tRNA(His) + AMP + diphosphate + H(+). The chain is Histidine--tRNA ligase from Methylocella silvestris (strain DSM 15510 / CIP 108128 / LMG 27833 / NCIMB 13906 / BL2).